Consider the following 466-residue polypeptide: 55 kDa erythrocyte membrane protein (466 aa).

T2 bears the N-acetylthreonine mark. S13 and S19 each carry phosphoserine. T49 bears the Phosphothreonine mark. Phosphoserine is present on residues S52, S57, and S110. A PDZ domain is found at L71 to Q152. The 71-residue stretch at A158–V228 folds into the SH3 domain. Position 243 is a phosphoserine (S243). Residues V268–Y466 form an interaction with PALS1 region. Residues R282–D451 enclose the Guanylate kinase-like domain.

Belongs to the MAGUK family. Heterodimer with PALS1. Interacts with DLG5 and NF2. Interacts (via guanylate kinase-like domain) with WHRN (via third PDZ domain). Post-translationally, palmitoylated.

It localises to the cell membrane. Its subcellular location is the cell projection. The protein resides in the stereocilium. Essential regulator of neutrophil polarity. Regulates neutrophil polarization by regulating AKT1 phosphorylation through a mechanism that is independent of PIK3CG activity. This is 55 kDa erythrocyte membrane protein (MPP1) from Pongo abelii (Sumatran orangutan).